The chain runs to 313 residues: Ubiquitin-conjugating enzyme E2 Z (313 aa).

The UBC core domain occupies 58 to 212; that stretch reads QCVLRIKRDI…IRHETIRVAV (155 aa). Cysteine 147 (glycyl thioester intermediate) is an active-site residue. A disordered region spans residues 283 to 313; the sequence is VREKHRKETVDIDSDSSSSETETDTQGSSNP. Low complexity predominate over residues 297 to 313; it reads DSSSSETETDTQGSSNP.

Belongs to the ubiquitin-conjugating enzyme family.

The protein localises to the cytoplasm. It localises to the nucleus. It catalyses the reaction S-ubiquitinyl-[E1 ubiquitin-activating enzyme]-L-cysteine + [E2 ubiquitin-conjugating enzyme]-L-cysteine = [E1 ubiquitin-activating enzyme]-L-cysteine + S-ubiquitinyl-[E2 ubiquitin-conjugating enzyme]-L-cysteine.. It functions in the pathway protein modification; protein ubiquitination. Its function is as follows. Catalyzes the covalent attachment of ubiquitin to other proteins. May be involved in apoptosis regulation. The polypeptide is Ubiquitin-conjugating enzyme E2 Z (ube2z) (Xenopus tropicalis (Western clawed frog)).